The following is a 900-amino-acid chain: Protein translocase subunit SecA (900 aa).

Residues Gln-87, 105 to 109 (GEGKT), and Asp-512 contribute to the ATP site. A disordered region spans residues 849–900 (ERLAQQQQFSHQEEDSLNTGSPAQADRKIGRNDPCPCGSGKKYKQCHGRLQK). 4 residues coordinate Zn(2+): Cys-883, Cys-885, Cys-894, and His-895. Over residues 889-900 (KKYKQCHGRLQK) the composition is skewed to basic residues.

It belongs to the SecA family. As to quaternary structure, monomer and homodimer. Part of the essential Sec protein translocation apparatus which comprises SecA, SecYEG and auxiliary proteins SecDF-YajC and YidC. Requires Zn(2+) as cofactor.

Its subcellular location is the cell inner membrane. It localises to the cytoplasm. It carries out the reaction ATP + H2O + cellular proteinSide 1 = ADP + phosphate + cellular proteinSide 2.. Part of the Sec protein translocase complex. Interacts with the SecYEG preprotein conducting channel. Has a central role in coupling the hydrolysis of ATP to the transfer of proteins into and across the cell membrane, serving both as a receptor for the preprotein-SecB complex and as an ATP-driven molecular motor driving the stepwise translocation of polypeptide chains across the membrane. This chain is Protein translocase subunit SecA, found in Pectobacterium atrosepticum (strain SCRI 1043 / ATCC BAA-672) (Erwinia carotovora subsp. atroseptica).